The chain runs to 95 residues: Large ribosomal subunit protein uL23 (95 aa).

Belongs to the universal ribosomal protein uL23 family. As to quaternary structure, contacts protein L29, and trigger factor when it is bound to the ribosome. Part of the 50S ribosomal subunit.

Its function is as follows. One of the early assembly proteins it binds 23S rRNA. One of the proteins that surrounds the polypeptide exit tunnel on the outside of the ribosome. Forms the main docking site for trigger factor binding to the ribosome. In Geobacillus stearothermophilus (Bacillus stearothermophilus), this protein is Large ribosomal subunit protein uL23.